The sequence spans 333 residues: GDP-mannose transporter GONST1 (333 aa).

The next 9 helical transmembrane spans lie at 33–55, 62–84, 99–121, 153–170, 174–196, 216–238, 253–275, 282–304, and 308–325; these read ALLS…KFVL, AGIF…LSLM, VWFP…LKYI, VWAA…GGIT, FNAV…SLTL, SMVL…FFNE, FWMV…MWFL, TYSL…LFNV, and LQNS…VVFA.

The protein belongs to the nucleotide-sugar transporter family. GDP-Mannose:GMP antiporter (GMA) (TC 2.A.7.13) subfamily.

It is found in the golgi apparatus membrane. Its function is as follows. Involved in the import of GDP-mannose from the cytoplasm into the Golgi lumen. Required for the luminal synthesis of a variety of plant cell surface components. Is required for the correct mannosylation of the glycosylinositol phosphoceramides (GIPC). Can indifferently transport GDP-mannose, GDP-Glucose, GDP-Fucose or GDP-Galactose in vitro. The protein is GDP-mannose transporter GONST1 of Arabidopsis thaliana (Mouse-ear cress).